The sequence spans 56 residues: Small ribosomal subunit protein uS14 (56 aa).

Positions 21, 24, 39, and 42 each coordinate Zn(2+).

Belongs to the universal ribosomal protein uS14 family. Component of the 40S small ribosomal subunit. Zn(2+) serves as cofactor.

Its subcellular location is the cytoplasm. The protein resides in the cytosol. The protein localises to the rough endoplasmic reticulum. The protein is Small ribosomal subunit protein uS14 (RpS29) of Lysiphlebus testaceipes (Greenbugs aphid parastoid).